Here is a 393-residue protein sequence, read N- to C-terminus: NAD(P)H-quinone oxidoreductase subunit H, chloroplastic (393 aa).

This sequence belongs to the complex I 49 kDa subunit family. In terms of assembly, NDH is composed of at least 16 different subunits, 5 of which are encoded in the nucleus.

Its subcellular location is the plastid. It localises to the chloroplast thylakoid membrane. The catalysed reaction is a plastoquinone + NADH + (n+1) H(+)(in) = a plastoquinol + NAD(+) + n H(+)(out). It carries out the reaction a plastoquinone + NADPH + (n+1) H(+)(in) = a plastoquinol + NADP(+) + n H(+)(out). Its function is as follows. NDH shuttles electrons from NAD(P)H:plastoquinone, via FMN and iron-sulfur (Fe-S) centers, to quinones in the photosynthetic chain and possibly in a chloroplast respiratory chain. The immediate electron acceptor for the enzyme in this species is believed to be plastoquinone. Couples the redox reaction to proton translocation, and thus conserves the redox energy in a proton gradient. This chain is NAD(P)H-quinone oxidoreductase subunit H, chloroplastic, found in Liriodendron tulipifera (Tuliptree).